Consider the following 349-residue polypeptide: Ribosomal RNA small subunit methyltransferase H 2 (349 aa).

Residues 80–82 (GGH), aspartate 100, phenylalanine 130, aspartate 149, and glutamine 156 each bind S-adenosyl-L-methionine.

The protein belongs to the methyltransferase superfamily. RsmH family.

It localises to the cytoplasm. The catalysed reaction is cytidine(1402) in 16S rRNA + S-adenosyl-L-methionine = N(4)-methylcytidine(1402) in 16S rRNA + S-adenosyl-L-homocysteine + H(+). Specifically methylates the N4 position of cytidine in position 1402 (C1402) of 16S rRNA. The sequence is that of Ribosomal RNA small subunit methyltransferase H 2 from Alkaliphilus metalliredigens (strain QYMF).